A 439-amino-acid chain; its full sequence is O-fucosyltransferase 13 (439 aa).

A helical; Signal-anchor for type II membrane protein transmembrane segment spans residues proline 8–serine 28. N-linked (GlcNAc...) asparagine glycosylation is found at asparagine 104 and asparagine 119. Histidine 238–arginine 240 serves as a coordination point for substrate. An N-linked (GlcNAc...) asparagine glycan is attached at asparagine 293.

The protein belongs to the glycosyltransferase GT106 family.

It localises to the membrane. It functions in the pathway glycan metabolism. The protein is O-fucosyltransferase 13 of Arabidopsis thaliana (Mouse-ear cress).